We begin with the raw amino-acid sequence, 225 residues long: NAD(P)H-quinone oxidoreductase subunit K, chloroplastic (225 aa).

Positions 43, 44, 108, and 139 each coordinate [4Fe-4S] cluster.

Belongs to the complex I 20 kDa subunit family. In terms of assembly, NDH is composed of at least 16 different subunits, 5 of which are encoded in the nucleus. [4Fe-4S] cluster is required as a cofactor.

It localises to the plastid. The protein localises to the chloroplast thylakoid membrane. The enzyme catalyses a plastoquinone + NADH + (n+1) H(+)(in) = a plastoquinol + NAD(+) + n H(+)(out). It carries out the reaction a plastoquinone + NADPH + (n+1) H(+)(in) = a plastoquinol + NADP(+) + n H(+)(out). In terms of biological role, NDH shuttles electrons from NAD(P)H:plastoquinone, via FMN and iron-sulfur (Fe-S) centers, to quinones in the photosynthetic chain and possibly in a chloroplast respiratory chain. The immediate electron acceptor for the enzyme in this species is believed to be plastoquinone. Couples the redox reaction to proton translocation, and thus conserves the redox energy in a proton gradient. This chain is NAD(P)H-quinone oxidoreductase subunit K, chloroplastic, found in Olimarabidopsis pumila (Dwarf rocket).